The primary structure comprises 122 residues: Large ribosomal subunit protein uL14c (122 aa).

Belongs to the universal ribosomal protein uL14 family. Part of the 50S ribosomal subunit.

The protein localises to the plastid. It is found in the chloroplast. Its function is as follows. Binds to 23S rRNA. This Pyropia yezoensis (Susabi-nori) protein is Large ribosomal subunit protein uL14c.